The primary structure comprises 646 residues: Translation initiation factor IF-2 (646 aa).

Positions 146–315 (PRPPVVTVMG…LLVAEMEELR (170 aa)) constitute a tr-type G domain. A G1 region spans residues 155–162 (GHVDHGKT). 155 to 162 (GHVDHGKT) is a binding site for GTP. Residues 180–184 (GITQH) form a G2 region. The segment at 201–204 (DTPG) is G3. GTP-binding positions include 201–205 (DTPGH) and 255–258 (NKID). Residues 255 to 258 (NKID) form a G4 region. The G5 stretch occupies residues 291-293 (SAK).

This sequence belongs to the TRAFAC class translation factor GTPase superfamily. Classic translation factor GTPase family. IF-2 subfamily.

The protein localises to the cytoplasm. In terms of biological role, one of the essential components for the initiation of protein synthesis. Protects formylmethionyl-tRNA from spontaneous hydrolysis and promotes its binding to the 30S ribosomal subunits. Also involved in the hydrolysis of GTP during the formation of the 70S ribosomal complex. The polypeptide is Translation initiation factor IF-2 (Clostridioides difficile (strain 630) (Peptoclostridium difficile)).